The sequence spans 271 residues: ELH (271 aa).

The N-terminal stretch at 1-28 (MKRPNNRPTNTMSLILCLTLSSLCVSSQ) is a signal peptide. 2 propeptides span residues 29-95 (SASV…NEKR) and 162-184 (AAGG…RRKR). Residues 162–190 (AAGGMEQSEGQNPETESHSRRKRSVLTPS) are disordered. Lys-241 is subject to Lysine amide.

It belongs to the molluscan ELH family. Bag cell neurons.

The protein localises to the secreted. Functionally, ELH acts as a neurotransmitter locally, upon neurons of the abdominal ganglion and as a hormone by diffusing into the circulating hemolymph and modulating the activity of other organs. It specifically causes contraction of smooth muscle in the ovotestis and expulsion of the egg string. In terms of biological role, alpha-BCP decreases the activity of a cluster of neurons in the left upper quadrant of the abdominal ganglion. Beta-BCP specifically excites 2 neurons, L1 and R1, in the abdominal ganglion. This is ELH from Aplysia californica (California sea hare).